We begin with the raw amino-acid sequence, 353 residues long: tRNA-specific 2-thiouridylase MnmA (353 aa).

ATP is bound by residues Gly-6–Ser-13 and Leu-32. The Nucleophile role is filled by Cys-99. Cys-99 and Cys-197 form a disulfide bridge. Residue Gly-124 coordinates ATP. The interval Lys-147–Gln-149 is interaction with tRNA. The active-site Cysteine persulfide intermediate is the Cys-197. The segment at Arg-303–Tyr-304 is interaction with tRNA.

The protein belongs to the MnmA/TRMU family.

Its subcellular location is the cytoplasm. It carries out the reaction S-sulfanyl-L-cysteinyl-[protein] + uridine(34) in tRNA + AH2 + ATP = 2-thiouridine(34) in tRNA + L-cysteinyl-[protein] + A + AMP + diphosphate + H(+). Its function is as follows. Catalyzes the 2-thiolation of uridine at the wobble position (U34) of tRNA, leading to the formation of s(2)U34. The chain is tRNA-specific 2-thiouridylase MnmA from Persephonella marina (strain DSM 14350 / EX-H1).